A 588-amino-acid polypeptide reads, in one-letter code: MSRVKILDEETISHIAAGEVVERAASVVKELVENAVDADAQIIRIGISADKTGITKISVTDDGIGMDFDDALLAFRQHATSKISRPEDLDGITTLGFRGEALASIAAISKVTFTTKERGSPSPEAARVVIHGGELISHSAVGAPEGTSVLIDALFYNTPARRKFQKSVPTELSHVYDMVERIALSNRNISFVLLYNGKERFQTFGTGSYPDVIAAVFGSTFSKELTPVSGSFGPVKIDGWITRPGSEMKTTQTRFYLSINGRQVTSRQLQWAIREGYGTLLPKGMYPAAFLDIVLDPRDVDVNVHPTKREVRLSREREVMRCVQDAVYTSLHEERVFSTAPMPTLARETITTLPVEIVGEPVPVYAGKQEMHEARQAPLKQTEKQLRRTESADLPETDLFVPEVLGQIGDTYILAKNESGDLIVVDQHAAHERIMYDQLLARSSSAEAGQELIVPQPITLSKKETAALPDLLDVLAAAGYLLEPFGKDVWMVRSVPVVSSTLGDPDTIHAILDAALDGVGNTDEVLDRVLKTAACRAVVKGNTPLTIEQMQRLLRQLMATKSPYTCPHGRPTTIVLSKSRLAGMFLRT.

It belongs to the DNA mismatch repair MutL/HexB family.

In terms of biological role, this protein is involved in the repair of mismatches in DNA. It is required for dam-dependent methyl-directed DNA mismatch repair. May act as a 'molecular matchmaker', a protein that promotes the formation of a stable complex between two or more DNA-binding proteins in an ATP-dependent manner without itself being part of a final effector complex. This Methanocorpusculum labreanum (strain ATCC 43576 / DSM 4855 / Z) protein is DNA mismatch repair protein MutL.